Here is a 198-residue protein sequence, read N- to C-terminus: 5'-deoxynucleotidase hdd1 (198 aa).

The HD domain maps to I38–I144. Residues H41, H69, D70, E73, D78, I79, and D139 each contribute to the a divalent metal cation site.

It belongs to the HDDC2 family. As to quaternary structure, homodimer. The cofactor is Mn(2+). Co(2+) serves as cofactor. Mg(2+) is required as a cofactor.

Its subcellular location is the cytoplasm. It is found in the nucleus. It carries out the reaction a 2'-deoxyribonucleoside 5'-phosphate + H2O = a 2'-deoxyribonucleoside + phosphate. Catalyzes the dephosphorylation of the nucleoside 5'-monophosphates deoxyadenosine monophosphate (dAMP), deoxycytidine monophosphate (dCMP), deoxyguanosine monophosphate (dGMP) and deoxythymidine monophosphate (dTMP). The protein is 5'-deoxynucleotidase hdd1 of Schizosaccharomyces pombe (strain 972 / ATCC 24843) (Fission yeast).